The primary structure comprises 269 residues: Mitochondrial S-adenosylmethionine carrier protein (269 aa).

Solcar repeat units follow at residues 4–77 (REFC…AKQL), 85–167 (LSPI…LKDL), and 176–264 (VDSW…VRTL). Transmembrane regions (helical) follow at residues 5–25 (EFCA…LILF), 49–69 (IYAG…AFFV), 84–104 (YLSP…ACLI), 141–161 (RGYK…FPLW), 181–201 (SAVC…PLDV), and 237–257 (FAGV…FLGA).

Belongs to the mitochondrial carrier (TC 2.A.29) family.

The protein resides in the mitochondrion inner membrane. The catalysed reaction is S-adenosyl-L-homocysteine(out) + S-adenosyl-L-methionine(in) = S-adenosyl-L-homocysteine(in) + S-adenosyl-L-methionine(out). Its function is as follows. Mitochondrial S-adenosyl-L-methionine/S-adenosyl-L-homocysteine antiporter. Mediates the exchange of cytosolic S-adenosyl-L-methionine, the predominant methyl-group donor for macromolecule methylation processes, for mitochondrial S-adenosylhomocysteine(SAH), a by-product of methylation reactions. This Xenopus tropicalis (Western clawed frog) protein is Mitochondrial S-adenosylmethionine carrier protein (slc25a26).